The sequence spans 340 residues: Dihydroorotate dehydrogenase (quinone) (340 aa).

FMN is bound by residues 65 to 69 (AGADK) and Thr89. A substrate-binding site is contributed by Lys69. 114–118 (NRNGF) serves as a coordination point for substrate. FMN is bound by residues Asn142 and Asn175. Residue Asn175 participates in substrate binding. Ser178 acts as the Nucleophile in catalysis. Asn180 lines the substrate pocket. Residues Lys220 and Thr248 each coordinate FMN. 249-250 (NT) contributes to the substrate binding site. FMN is bound by residues Gly271, Gly300, and 321 to 322 (YS).

The protein belongs to the dihydroorotate dehydrogenase family. Type 2 subfamily. Monomer. FMN serves as cofactor.

It is found in the cell membrane. It catalyses the reaction (S)-dihydroorotate + a quinone = orotate + a quinol. The protein operates within pyrimidine metabolism; UMP biosynthesis via de novo pathway; orotate from (S)-dihydroorotate (quinone route): step 1/1. In terms of biological role, catalyzes the conversion of dihydroorotate to orotate with quinone as electron acceptor. This is Dihydroorotate dehydrogenase (quinone) from Actinobacillus succinogenes (strain ATCC 55618 / DSM 22257 / CCUG 43843 / 130Z).